The primary structure comprises 294 residues: Cytidine deaminase (294 aa).

CMP/dCMP-type deaminase domains are found at residues 48-168 (DEDA…FGPK) and 186-294 (LTGD…VLLG). Substrate is bound at residue 89-91 (NME). A Zn(2+)-binding site is contributed by His-102. Glu-104 (proton donor) is an active-site residue. Cys-129 and Cys-132 together coordinate Zn(2+).

This sequence belongs to the cytidine and deoxycytidylate deaminase family. As to quaternary structure, homodimer. It depends on Zn(2+) as a cofactor.

The enzyme catalyses cytidine + H2O + H(+) = uridine + NH4(+). The catalysed reaction is 2'-deoxycytidine + H2O + H(+) = 2'-deoxyuridine + NH4(+). Its function is as follows. This enzyme scavenges exogenous and endogenous cytidine and 2'-deoxycytidine for UMP synthesis. The sequence is that of Cytidine deaminase from Salmonella dublin (strain CT_02021853).